A 74-amino-acid polypeptide reads, in one-letter code: MERAQCLRKGILSFERSLEQRSLILSPRLEYSGAITAHCSLDLLDSTNPPASAFWVVETTDTEDEREKKREITE.

This is an uncharacterized protein from Homo sapiens (Human).